The primary structure comprises 449 residues: Asparagine--tRNA ligase (449 aa).

The protein belongs to the class-II aminoacyl-tRNA synthetase family. In terms of assembly, homodimer.

The protein localises to the cytoplasm. The enzyme catalyses tRNA(Asn) + L-asparagine + ATP = L-asparaginyl-tRNA(Asn) + AMP + diphosphate + H(+). The polypeptide is Asparagine--tRNA ligase (Mesomycoplasma hyopneumoniae (strain 7448) (Mycoplasma hyopneumoniae)).